Consider the following 226-residue polypeptide: dTTP/UTP pyrophosphatase (226 aa).

Catalysis depends on aspartate 85, which acts as the Proton acceptor.

Belongs to the Maf family. YhdE subfamily. A divalent metal cation is required as a cofactor.

Its subcellular location is the cytoplasm. The catalysed reaction is dTTP + H2O = dTMP + diphosphate + H(+). The enzyme catalyses UTP + H2O = UMP + diphosphate + H(+). Its function is as follows. Nucleoside triphosphate pyrophosphatase that hydrolyzes dTTP and UTP. May have a dual role in cell division arrest and in preventing the incorporation of modified nucleotides into cellular nucleic acids. The polypeptide is dTTP/UTP pyrophosphatase (Psychrobacter cryohalolentis (strain ATCC BAA-1226 / DSM 17306 / VKM B-2378 / K5)).